The sequence spans 96 residues: Co-chaperonin GroES (96 aa).

It belongs to the GroES chaperonin family. Heptamer of 7 subunits arranged in a ring. Interacts with the chaperonin GroEL.

It is found in the cytoplasm. Functionally, together with the chaperonin GroEL, plays an essential role in assisting protein folding. The GroEL-GroES system forms a nano-cage that allows encapsulation of the non-native substrate proteins and provides a physical environment optimized to promote and accelerate protein folding. GroES binds to the apical surface of the GroEL ring, thereby capping the opening of the GroEL channel. This chain is Co-chaperonin GroES, found in Acidithiobacillus ferrooxidans (strain ATCC 23270 / DSM 14882 / CIP 104768 / NCIMB 8455) (Ferrobacillus ferrooxidans (strain ATCC 23270)).